We begin with the raw amino-acid sequence, 699 residues long: uncharacterized protein (699 aa).

Disordered regions lie at residues 175 to 208 (PTLG…ASLS), 289 to 364 (PTAK…EEPD), and 539 to 603 (RAKE…KEYL). The span at 183–194 (PSKHGDHSDSKT) shows a compositional bias: basic and acidic residues. The span at 195-208 (YESPISNSQAASLS) shows a compositional bias: polar residues. The segment covering 308–322 (SKHKKRPKRLSKFKQ) has biased composition (basic residues). The span at 323-338 (AKLETKKSGNKDHATS) shows a compositional bias: basic and acidic residues. Composition is skewed to polar residues over residues 339 to 360 (SEKL…SSSI) and 548 to 573 (HSNA…NTKL). Residues 574–603 (NPKEEDKSTVESELKAPPKEKSSETSKEYL) show a composition bias toward basic and acidic residues.

The protein localises to the cytoplasm. This is an uncharacterized protein from Schizosaccharomyces pombe (strain 972 / ATCC 24843) (Fission yeast).